The primary structure comprises 299 residues: MIKVEKFSDEISKAEVLVEALPYIKKFAGSIAVIKFGGNAMKDPQIKSMVAEDIVLMKYVGLNPVIVHGGGPDINKMLASLNIETKFVNGLRVTDEKVMEIVEMVLVGKINKEITSLINKTGGKAVGLSGKDANLLLAEKDLSQGDLGYVGKVVNVNREVILNLIEKDYIPVIAPCAIGRDWKTYNVNADIAAGKIASSLNADKFVLLTDVEGVLKNKEDEESVISRLSYREAKDLLNSQFITGGMIPKLKCCIQALEDGVKRAHIIDGRIPHALLLEIYTDKGVGTMIAKEVYDNDNL.

Substrate contacts are provided by residues 70–71, Arg92, and Asn186; that span reads GG.

This sequence belongs to the acetylglutamate kinase family. ArgB subfamily.

Its subcellular location is the cytoplasm. The catalysed reaction is N-acetyl-L-glutamate + ATP = N-acetyl-L-glutamyl 5-phosphate + ADP. It participates in amino-acid biosynthesis; L-arginine biosynthesis; N(2)-acetyl-L-ornithine from L-glutamate: step 2/4. Functionally, catalyzes the ATP-dependent phosphorylation of N-acetyl-L-glutamate. This is Acetylglutamate kinase from Petrotoga mobilis (strain DSM 10674 / SJ95).